The following is a 474-amino-acid chain: 1-aminocyclopropane-1-carboxylate synthase 4 (474 aa).

Substrate-binding residues include Glu47 and Tyr85. At Lys273 the chain carries N6-(pyridoxal phosphate)lysine.

This sequence belongs to the class-I pyridoxal-phosphate-dependent aminotransferase family. Homodimer and heterodimer. In vivo, the relevance of heterodimerization with other ACS enzymes is however unsure. Interacts with XBAT32. Interacts (via its C-terminal region) with ETO1 and EOL1. Pyridoxal 5'-phosphate is required as a cofactor. In terms of processing, ubiquitinated by XBAT32. Ubiquitination probably leads to its subsequent degradation, thus controlling ethylene production. In terms of tissue distribution, expressed in roots, leaves and flowers.

It carries out the reaction S-adenosyl-L-methionine = 1-aminocyclopropane-1-carboxylate + S-methyl-5'-thioadenosine + H(+). It functions in the pathway alkene biosynthesis; ethylene biosynthesis via S-adenosyl-L-methionine; ethylene from S-adenosyl-L-methionine: step 1/2. In terms of biological role, 1-aminocyclopropane-1-carboxylate synthase (ACS) enzymes catalyze the conversion of S-adenosyl-L-methionine (SAM) into 1-aminocyclopropane-1-carboxylate (ACC), a direct precursor of ethylene. This chain is 1-aminocyclopropane-1-carboxylate synthase 4 (ACS4), found in Arabidopsis thaliana (Mouse-ear cress).